Consider the following 367-residue polypeptide: Glutamate 5-kinase (367 aa).

ATP is bound at residue K10. Residues S50, D137, and N149 each contribute to the substrate site. ATP-binding positions include 169–170 (TD) and 211–217 (TGGMGTK). Residues 275 to 353 (AGELTVDAGA…QQIDAILGYE (79 aa)) form the PUA domain.

This sequence belongs to the glutamate 5-kinase family.

It is found in the cytoplasm. The catalysed reaction is L-glutamate + ATP = L-glutamyl 5-phosphate + ADP. It functions in the pathway amino-acid biosynthesis; L-proline biosynthesis; L-glutamate 5-semialdehyde from L-glutamate: step 1/2. Its function is as follows. Catalyzes the transfer of a phosphate group to glutamate to form L-glutamate 5-phosphate. This Klebsiella pneumoniae (strain 342) protein is Glutamate 5-kinase.